We begin with the raw amino-acid sequence, 149 residues long: SKP1-like protein 14 (149 aa).

The segment at 91–149 (LLAANYLNIKGLLDLSAQTVADRIKDKTPEEIREIFNIENDFTPEEEAAVRKENAWAFE) is interaction with the F-box domain of F-box proteins.

Belongs to the SKP1 family. As to quaternary structure, part of a SCF (SKP1-cullin-F-box) protein ligase complex. Interacts with CPR1/CPR30, At3g61590, At4g39550 and At5g49610. In terms of tissue distribution, restricted to inflorescences, pollen and leaves.

Its subcellular location is the nucleus. It functions in the pathway protein modification; protein ubiquitination. Its function is as follows. Involved in ubiquitination and subsequent proteasomal degradation of target proteins. Together with CUL1, RBX1 and a F-box protein, it forms a SCF E3 ubiquitin ligase complex. The functional specificity of this complex depends on the type of F-box protein. In the SCF complex, it serves as an adapter that links the F-box protein to CUL1. In Arabidopsis thaliana (Mouse-ear cress), this protein is SKP1-like protein 14 (ASK14).